We begin with the raw amino-acid sequence, 407 residues long: Imidazolonepropionase (407 aa).

Residues His-68 and His-70 each contribute to the Fe(3+) site. The Zn(2+) site is built by His-68 and His-70. 4-imidazolone-5-propanoate is bound by residues Arg-77, Tyr-140, and His-173. Residue Tyr-140 coordinates N-formimidoyl-L-glutamate. A Fe(3+)-binding site is contributed by His-238. His-238 contributes to the Zn(2+) binding site. Gln-241 serves as a coordination point for 4-imidazolone-5-propanoate. Residue Asp-313 coordinates Fe(3+). Zn(2+) is bound at residue Asp-313. Asn-315 and Gly-317 together coordinate N-formimidoyl-L-glutamate. Thr-318 is a binding site for 4-imidazolone-5-propanoate.

This sequence belongs to the metallo-dependent hydrolases superfamily. HutI family. Zn(2+) serves as cofactor. The cofactor is Fe(3+).

It localises to the cytoplasm. It catalyses the reaction 4-imidazolone-5-propanoate + H2O = N-formimidoyl-L-glutamate. It participates in amino-acid degradation; L-histidine degradation into L-glutamate; N-formimidoyl-L-glutamate from L-histidine: step 3/3. In terms of biological role, catalyzes the hydrolytic cleavage of the carbon-nitrogen bond in imidazolone-5-propanoate to yield N-formimidoyl-L-glutamate. It is the third step in the universal histidine degradation pathway. The polypeptide is Imidazolonepropionase (Burkholderia pseudomallei (strain 1710b)).